We begin with the raw amino-acid sequence, 356 residues long: 3-isopropylmalate dehydrogenase (356 aa).

The substrate site is built by Arg90, Arg100, Arg128, and Asp222. 3 residues coordinate Mg(2+): Asp222, Asp246, and Asp250. Gly280–Asn292 contacts NAD(+).

The protein belongs to the isocitrate and isopropylmalate dehydrogenases family. LeuB type 1 subfamily. Homodimer. It depends on Mg(2+) as a cofactor. Mn(2+) serves as cofactor.

It localises to the cytoplasm. The catalysed reaction is (2R,3S)-3-isopropylmalate + NAD(+) = 4-methyl-2-oxopentanoate + CO2 + NADH. Its pathway is amino-acid biosynthesis; L-leucine biosynthesis; L-leucine from 3-methyl-2-oxobutanoate: step 3/4. Functionally, catalyzes the oxidation of 3-carboxy-2-hydroxy-4-methylpentanoate (3-isopropylmalate) to 3-carboxy-4-methyl-2-oxopentanoate. The product decarboxylates to 4-methyl-2 oxopentanoate. The polypeptide is 3-isopropylmalate dehydrogenase (Albidiferax ferrireducens (strain ATCC BAA-621 / DSM 15236 / T118) (Rhodoferax ferrireducens)).